The sequence spans 89 residues: Small ribosomal subunit protein uS15 (89 aa).

This sequence belongs to the universal ribosomal protein uS15 family. As to quaternary structure, part of the 30S ribosomal subunit. Forms a bridge to the 50S subunit in the 70S ribosome, contacting the 23S rRNA.

Functionally, one of the primary rRNA binding proteins, it binds directly to 16S rRNA where it helps nucleate assembly of the platform of the 30S subunit by binding and bridging several RNA helices of the 16S rRNA. Its function is as follows. Forms an intersubunit bridge (bridge B4) with the 23S rRNA of the 50S subunit in the ribosome. This is Small ribosomal subunit protein uS15 from Polynucleobacter necessarius subsp. necessarius (strain STIR1).